Consider the following 312-residue polypeptide: Large ribosomal subunit protein uL10 (312 aa).

Lys-14 participates in a covalent cross-link: Glycyl lysine isopeptide (Lys-Gly) (interchain with G-Cter in ubiquitin). Ser-68 is modified (phosphoserine). Glycyl lysine isopeptide (Lys-Gly) (interchain with G-Cter in ubiquitin) cross-links involve residues Lys-97 and Lys-144. Residues 199-230 are interaction with P1A-P2B; it reads SSILDITDEELVSHFVSAVSTIASISLAIGYP. The segment at 231–258 is interaction with P1B-P2A; sequence TLPSVGHTLINNYKDLLAVAIAASYHYP. Residues 278 to 293 show a composition bias toward low complexity; the sequence is PAATSAASGDAAPAEE. The disordered stretch occupies residues 278-312; it reads PAATSAASGDAAPAEEAAAEEEEESDDDMGFGLFD. The segment covering 294 to 306 has biased composition (acidic residues); the sequence is AAAEEEEESDDDM. Residue Ser-302 is modified to Phosphoserine; by CK2.

Belongs to the universal ribosomal protein uL10 family. As to quaternary structure, component of the large ribosomal subunit (LSU). Mature yeast ribosomes consist of a small (40S) and a large (60S) subunit. The 40S small subunit contains 1 molecule of ribosomal RNA (18S rRNA) and 33 different proteins (encoded by 57 genes). The large 60S subunit contains 3 rRNA molecules (25S, 5.8S and 5S rRNA) and 46 different proteins (encoded by 81 genes). The 5 acidic ribosomal P-proteins form the stalk structure of the 60S subunit. They are organized as a pentameric complex in which uL10/P0 interacts with 2 heterodimers, P1A-P2B and P1B-P2A. uL10 directly interacts with 28S rRNA. uL10 interacts with YFL034W.

It localises to the cytoplasm. Its function is as follows. Component of the ribosome, a large ribonucleoprotein complex responsible for the synthesis of proteins in the cell. The small ribosomal subunit (SSU) binds messenger RNAs (mRNAs) and translates the encoded message by selecting cognate aminoacyl-transfer RNA (tRNA) molecules. The large subunit (LSU) contains the ribosomal catalytic site termed the peptidyl transferase center (PTC), which catalyzes the formation of peptide bonds, thereby polymerizing the amino acids delivered by tRNAs into a polypeptide chain. The nascent polypeptides leave the ribosome through a tunnel in the LSU and interact with protein factors that function in enzymatic processing, targeting, and the membrane insertion of nascent chains at the exit of the ribosomal tunnel. uL10 forms part of the P stalk that participates in recruiting G proteins to the ribosome. The protein is Large ribosomal subunit protein uL10 of Saccharomyces cerevisiae (strain ATCC 204508 / S288c) (Baker's yeast).